Here is a 359-residue protein sequence, read N- to C-terminus: Protein disulfide-isomerase tigA (359 aa).

Positions 1–19 (MVRLSNLVSCLGLASAVTA) are cleaved as a signal peptide. 2 consecutive Thioredoxin domains span residues 20-129 (AVVD…EKTG) and 131-250 (KPRG…EKTG). Active-site nucleophile residues include Cys-49, Cys-52, Cys-169, and Cys-172. 2 disulfides stabilise this stretch: Cys-49–Cys-52 and Cys-169–Cys-172. The Prevents secretion from ER signature appears at 356–359 (KDEL).

The protein belongs to the protein disulfide isomerase family.

The protein resides in the endoplasmic reticulum lumen. It catalyses the reaction Catalyzes the rearrangement of -S-S- bonds in proteins.. The protein is Protein disulfide-isomerase tigA (tigA) of Aspergillus niger.